We begin with the raw amino-acid sequence, 150 residues long: Catabolic 3-dehydroquinase (150 aa).

Tyrosine 24 acts as the Proton acceptor in catalysis. Asparagine 75, histidine 81, and aspartate 88 together coordinate substrate. Histidine 101 (proton donor) is an active-site residue. Substrate contacts are provided by residues 102–103 (IS) and arginine 112.

The protein belongs to the type-II 3-dehydroquinase family. As to quaternary structure, homododecamer. Adopts a ring-like structure, composed of an arrangement of two hexameric rings stacked on top of one another.

It catalyses the reaction 3-dehydroquinate = 3-dehydroshikimate + H2O. It functions in the pathway aromatic compound metabolism; 3,4-dihydroxybenzoate biosynthesis; 3,4-dihydroxybenzoate from 3-dehydroquinate: step 1/2. Is involved in the catabolism of quinate. Allows the utilization of quinate as carbon source via the beta-ketoadipate pathway. The polypeptide is Catabolic 3-dehydroquinase (Verticillium alfalfae (strain VaMs.102 / ATCC MYA-4576 / FGSC 10136) (Verticillium wilt of alfalfa)).